We begin with the raw amino-acid sequence, 110 residues long: Small ribosomal subunit protein bS6 (110 aa).

The protein belongs to the bacterial ribosomal protein bS6 family.

Binds together with bS18 to 16S ribosomal RNA. This is Small ribosomal subunit protein bS6 (rpsF) from Aquifex aeolicus (strain VF5).